A 119-amino-acid chain; its full sequence is Small ribosomal subunit protein uS10 (119 aa).

At Ala-2 the chain carries N-acetylalanine. Residue Lys-4 forms a Glycyl lysine isopeptide (Lys-Gly) (interchain with G-Cter in ubiquitin) linkage. The residue at position 8 (Lys-8) is an N6-succinyllysine; alternate. Residue Lys-8 forms a Glycyl lysine isopeptide (Lys-Gly) (interchain with G-Cter in ubiquitin); alternate linkage. Phosphothreonine is present on Thr-9. Residues Lys-34 and Lys-75 each carry the N6-acetyllysine modification. Ser-93 carries the phosphoserine modification.

Belongs to the universal ribosomal protein uS10 family. Component of the 40S small ribosomal subunit. In terms of processing, polyubiquitinated by ZNF598 via 'Lys-63'-linked ubiquitin chains when a ribosome has stalled, initiating the ribosome quality control (RQC) pathway to degrade the potentially detrimental aberrant nascent polypeptide. Deubiquitinated by OTUD3 and USP21, antagonizing ZNF598 activity. Post-translationally, ufmylated by UFL1.

It is found in the cytoplasm. In terms of biological role, component of the small ribosomal subunit. The ribosome is a large ribonucleoprotein complex responsible for the synthesis of proteins in the cell. The protein is Small ribosomal subunit protein uS10 (RPS20) of Pongo abelii (Sumatran orangutan).